The primary structure comprises 202 residues: FMN reductase (NADH) RutF (202 aa).

A compositionally biased stretch (low complexity) spans 168–191 (PRAPRGGSAPAEPARGARAIGARP). The tract at residues 168-202 (PRAPRGGSAPAEPARGARAIGARPPEGPVLALRSA) is disordered.

Belongs to the non-flavoprotein flavin reductase family. RutF subfamily.

The catalysed reaction is FMNH2 + NAD(+) = FMN + NADH + 2 H(+). Catalyzes the reduction of FMN to FMNH2 which is used to reduce pyrimidine by RutA via the Rut pathway. The sequence is that of FMN reductase (NADH) RutF from Methylorubrum populi (strain ATCC BAA-705 / NCIMB 13946 / BJ001) (Methylobacterium populi).